Consider the following 278-residue polypeptide: Large ribosomal subunit protein uL2 (278 aa).

A disordered region spans residues 225–278; the sequence is MNPVDHPHGGGEGRTSGGRHPVTPWGKPTKGKKTRANKATDKYIVRSRHQKKKG. Positions 269–278 are enriched in basic residues; it reads VRSRHQKKKG.

The protein belongs to the universal ribosomal protein uL2 family. In terms of assembly, part of the 50S ribosomal subunit. Forms a bridge to the 30S subunit in the 70S ribosome.

One of the primary rRNA binding proteins. Required for association of the 30S and 50S subunits to form the 70S ribosome, for tRNA binding and peptide bond formation. It has been suggested to have peptidyltransferase activity; this is somewhat controversial. Makes several contacts with the 16S rRNA in the 70S ribosome. In Parvibaculum lavamentivorans (strain DS-1 / DSM 13023 / NCIMB 13966), this protein is Large ribosomal subunit protein uL2.